Consider the following 494-residue polypeptide: Membrane-bound lytic murein transglycosylase F 1 (494 aa).

Residues 1–24 (MRIMAVRLVAGAITLALMAYAWLA) form the signal peptide. The tract at residues 25 to 270 (WERARDPEPI…TLLEEHFGHL (246 aa)) is non-LT domain. The segment at 271–494 (GRFDYVGFRA…APLPADPPAD (224 aa)) is LT domain. The active site involves Glu317. Positions 464 to 494 (QVPAGEALGEPPLPTPPAPPGAPLPADPPAD) are disordered. Pro residues predominate over residues 474-494 (PPLPTPPAPPGAPLPADPPAD).

In the N-terminal section; belongs to the bacterial solute-binding protein 3 family. This sequence in the C-terminal section; belongs to the transglycosylase Slt family.

Its subcellular location is the cell outer membrane. The enzyme catalyses Exolytic cleavage of the (1-&gt;4)-beta-glycosidic linkage between N-acetylmuramic acid (MurNAc) and N-acetylglucosamine (GlcNAc) residues in peptidoglycan, from either the reducing or the non-reducing ends of the peptidoglycan chains, with concomitant formation of a 1,6-anhydrobond in the MurNAc residue.. Functionally, murein-degrading enzyme that degrades murein glycan strands and insoluble, high-molecular weight murein sacculi, with the concomitant formation of a 1,6-anhydromuramoyl product. Lytic transglycosylases (LTs) play an integral role in the metabolism of the peptidoglycan (PG) sacculus. Their lytic action creates space within the PG sacculus to allow for its expansion as well as for the insertion of various structures such as secretion systems and flagella. This Alkalilimnicola ehrlichii (strain ATCC BAA-1101 / DSM 17681 / MLHE-1) protein is Membrane-bound lytic murein transglycosylase F 1.